The following is a 396-amino-acid chain: Elongation factor Tu (396 aa).

One can recognise a tr-type G domain in the interval 10-205 (KPHVNIGTIG…ACDDNIPDPV (196 aa)). The G1 stretch occupies residues 19–26 (GHVDHGKT). 19-26 (GHVDHGKT) is a GTP binding site. Threonine 26 contacts Mg(2+). The G2 stretch occupies residues 62–66 (GITIN). A G3 region spans residues 83 to 86 (DAPG). Residues 83–87 (DAPGH) and 138–141 (NKCD) each bind GTP. Positions 138–141 (NKCD) are G4. The G5 stretch occupies residues 175–177 (SAL).

This sequence belongs to the TRAFAC class translation factor GTPase superfamily. Classic translation factor GTPase family. EF-Tu/EF-1A subfamily. As to quaternary structure, monomer.

It is found in the cytoplasm. It carries out the reaction GTP + H2O = GDP + phosphate + H(+). Its function is as follows. GTP hydrolase that promotes the GTP-dependent binding of aminoacyl-tRNA to the A-site of ribosomes during protein biosynthesis. In Corynebacterium glutamicum (strain R), this protein is Elongation factor Tu.